We begin with the raw amino-acid sequence, 918 residues long: MDYKETLLLPKTTFPMRGNLPQNEPKRFAKWFEKDVYEKMKKSREGKELFTLHDGPPYANGHIHIGHALNKILKDIIVKFNYFEGKAVRFTPGWDCHGLPIEQQVEKKLGTAKKEQLPKTKIRELCREHAAKFVGIQKEEFKNLGVIADWEKPYLTMDYAFEADIYRALCEIAKEGLLVERSKPVYWSWAAKTALAEAEVEYEDKVSPSIYVAFKLDKEAVQKIGKEASIIIWTTTPWTLPANTGIALNPDIEYVLTSDGYVVAADLLDELKEKGIVKGDVEKSISPKDLENLHAINPLNGRRSRIVLGEHVTTESGTGAVHTAPGHGEDDYRVGLKYDLEVLMPVDDAGRYDETIVREKLLPEEFVGMNVFEANDKICELLGDALLKKEDIKHSYPHCWRTHKPIIFRATKQWFIAVDKAPKDLQKTLRQIALEEVEKTTFYPEWGRNRLKSMIENRPDWCISRQRDWGVPIAFFRNKKTGEVIYDEKVLNYIAMIFERMGTDAWYSLSVEELLYPGSGYDPNDLEKVMDILDVWFDSGSTWYAVLKSRRYDAGNYPADLYLEGSDQHRGWFQSSLLVSGAIEKRAPFKAILTHGFTVDEKGEKMSKSKGNVVAPMDVAKKYGVEILRLWVAMSDYQSDLKISDNILKQIAEQYRKLRNTFRFMLANINDLETIQSDFGVLDRWILAKAKSVFEEVEKQFKNYQFAKGFSALNNFIVNEFSGIYLDVCKDRLYCDALNDSHRRASQSAMALIAKSMLGLIAPVLTYTADEIVEHAPSVLRNDAEDIFDFAIEPLPEIQSDFDEVYMIEARSKFNEIVDQLKKKKIIKSSLELVIETTSSKVLALDATEREDWFIVSGVEEEIGSKELGDFKVEGDQFIIKEAILHKCPRCWKYKAKEEGALCERCQKVVDGLEQAGS.

The short motif at 57-67 (PYANGHIHIGH) is the 'HIGH' region element. Glutamate 564 is an L-isoleucyl-5'-AMP binding site. The 'KMSKS' region motif lies at 605–609 (KMSKS). Lysine 608 serves as a coordination point for ATP. Residues cysteine 888, cysteine 891, cysteine 903, and cysteine 906 each contribute to the Zn(2+) site.

Belongs to the class-I aminoacyl-tRNA synthetase family. IleS type 1 subfamily. As to quaternary structure, monomer. Zn(2+) serves as cofactor.

It is found in the cytoplasm. The catalysed reaction is tRNA(Ile) + L-isoleucine + ATP = L-isoleucyl-tRNA(Ile) + AMP + diphosphate. Catalyzes the attachment of isoleucine to tRNA(Ile). As IleRS can inadvertently accommodate and process structurally similar amino acids such as valine, to avoid such errors it has two additional distinct tRNA(Ile)-dependent editing activities. One activity is designated as 'pretransfer' editing and involves the hydrolysis of activated Val-AMP. The other activity is designated 'posttransfer' editing and involves deacylation of mischarged Val-tRNA(Ile). The sequence is that of Isoleucine--tRNA ligase from Nitratiruptor sp. (strain SB155-2).